Reading from the N-terminus, the 442-residue chain is Interferon-related developmental regulator 2 (442 aa).

A compositionally biased stretch (basic residues) spans 1 to 15 (MPRARKGNTLRKGGQ). The interval 1–71 (MPRARKGNTL…DVVDEQGQQE (71 aa)) is disordered. A compositionally biased stretch (polar residues) spans 43–56 (TASECPSLLSTTAE).

This sequence belongs to the IFRD family. In terms of assembly, associates with ribosomes; promoting ribosome inactivation. Expressed in many tissues including heart, brain, placenta, lung, liver, skeletal muscle, kidney and pancreas.

In terms of biological role, ribosome-binding protein that acts as an inhibitor of mRNA translation by promoting ribosome inactivation. Associates with the P- and E-sites of the ribosome and inserts a C-terminal helix into the mRNA exit channel to preclude translation. The protein is Interferon-related developmental regulator 2 of Homo sapiens (Human).